Consider the following 654-residue polypeptide: Beta-mannosyltransferase 2 (654 aa).

The Cytoplasmic portion of the chain corresponds to 1–37 (MLAWLRHRIRSYNTSTYSSILPSASFGKVYKIGTKLN). A helical membrane pass occupies residues 38–58 (FTLLALCLLLACSVFFNYFYL). Over 59-654 (ADNNGLDIDT…ANGNGKGSSS (596 aa)) the chain is Extracellular.

It belongs to the BMT family.

It localises to the membrane. Its function is as follows. Beta-mannosyltransferase involved in cell wall biosynthesis. Required for the addition of beta-mannose to the acid-labile fraction of cell wall phosphopeptidomannan. In Candida albicans (strain SC5314 / ATCC MYA-2876) (Yeast), this protein is Beta-mannosyltransferase 2 (RHD1).